The chain runs to 206 residues: Methyltransferase-like 26 (206 aa).

This sequence belongs to the UPF0585 family.

The chain is Methyltransferase-like 26 from Danio rerio (Zebrafish).